Here is a 223-residue protein sequence, read N- to C-terminus: Class E basic helix-loop-helix protein 23 (223 aa).

The disordered stretch occupies residues 32–93; that stretch reads PETTRGFGAS…GVAVDARRRP (62 aa). A bHLH domain is found at 98–152; the sequence is SLRLSINARERRRMHDLNDALDGLRAVIPYAHSPSVRKLSKIATLLLAKNYILMQ.

Expressed in brain and retina.

Its subcellular location is the nucleus. Functionally, may function as transcriptional repressor. May modulate the expression of genes required for the differentiation and/or maintenance of pancreatic and neuronal cell types. May be important for rod bipolar cell maturation. The protein is Class E basic helix-loop-helix protein 23 (Bhlhe23) of Mus musculus (Mouse).